The chain runs to 635 residues: Threonine--tRNA ligase (635 aa).

The TGS domain maps to 1–61; the sequence is MIAITLPDGS…DRDVALAIIT (61 aa). Positions 242–533 are catalytic; that stretch reads DHRKLGKSLD…LLENHAGALP (292 aa). Zn(2+)-binding residues include cysteine 333, histidine 384, and histidine 510.

The protein belongs to the class-II aminoacyl-tRNA synthetase family. In terms of assembly, homodimer. It depends on Zn(2+) as a cofactor.

The protein localises to the cytoplasm. The enzyme catalyses tRNA(Thr) + L-threonine + ATP = L-threonyl-tRNA(Thr) + AMP + diphosphate + H(+). Its function is as follows. Catalyzes the attachment of threonine to tRNA(Thr) in a two-step reaction: L-threonine is first activated by ATP to form Thr-AMP and then transferred to the acceptor end of tRNA(Thr). Also edits incorrectly charged L-seryl-tRNA(Thr). This Cupriavidus pinatubonensis (strain JMP 134 / LMG 1197) (Cupriavidus necator (strain JMP 134)) protein is Threonine--tRNA ligase.